Reading from the N-terminus, the 732-residue chain is Catalase-peroxidase (732 aa).

An N-terminal signal peptide occupies residues 1 to 15 (MSTESKCPFAGGAYA). The segment at residues 96–219 (WHSAGTYRIY…LGAVQMGLIY (124 aa)) is a cross-link (tryptophyl-tyrosyl-methioninium (Trp-Tyr) (with M-245)). Residue H97 is the Proton acceptor of the active site. Positions 219–245 (YVNPEGPNGNPDPLASARDIRETFARM) form a cross-link, tryptophyl-tyrosyl-methioninium (Tyr-Met) (with W-96). Residue H260 coordinates heme b.

The protein belongs to the peroxidase family. Peroxidase/catalase subfamily. In terms of assembly, homodimer or homotetramer. Heme b is required as a cofactor. Formation of the three residue Trp-Tyr-Met cross-link is important for the catalase, but not the peroxidase activity of the enzyme.

The catalysed reaction is H2O2 + AH2 = A + 2 H2O. It carries out the reaction 2 H2O2 = O2 + 2 H2O. Bifunctional enzyme with both catalase and broad-spectrum peroxidase activity. This is Catalase-peroxidase from Acidobacterium capsulatum (strain ATCC 51196 / DSM 11244 / BCRC 80197 / JCM 7670 / NBRC 15755 / NCIMB 13165 / 161).